We begin with the raw amino-acid sequence, 431 residues long: Histidinol dehydrogenase (431 aa).

Tyr-127, Gln-189, and Asn-212 together coordinate NAD(+). Positions 237, 259, and 262 each coordinate substrate. Zn(2+) is bound by residues Gln-259 and His-262. Catalysis depends on proton acceptor residues Glu-326 and His-327. Substrate contacts are provided by His-327, Asp-360, Glu-414, and His-419. Residue Asp-360 participates in Zn(2+) binding. His-419 is a Zn(2+) binding site.

It belongs to the histidinol dehydrogenase family. Zn(2+) serves as cofactor.

It catalyses the reaction L-histidinol + 2 NAD(+) + H2O = L-histidine + 2 NADH + 3 H(+). It functions in the pathway amino-acid biosynthesis; L-histidine biosynthesis; L-histidine from 5-phospho-alpha-D-ribose 1-diphosphate: step 9/9. Catalyzes the sequential NAD-dependent oxidations of L-histidinol to L-histidinaldehyde and then to L-histidine. The polypeptide is Histidinol dehydrogenase (Xylella fastidiosa (strain 9a5c)).